The sequence spans 101 residues: MGTRCLLVLLLVLLVLRCDVQGDDMARQDEATGPTLLSQMQESLYSYWGSAKAAAQDLYEKTYLTAVDEKIRDMYSTSTAAVRIYTGILTDQILSMLSGDS.

The first 22 residues, 1 to 22 (MGTRCLLVLLLVLLVLRCDVQG), serve as a signal peptide directing secretion. Positions 23–28 (DDMARQ) are cleaved as a propeptide — removed in mature form. Residues 66–74 (AVDEKIRDM) form a lipid binding region. Residues 78–101 (STAAVRIYTGILTDQILSMLSGDS) form a lipoprotein lipase cofactor region.

It belongs to the apolipoprotein C2 family. In terms of processing, proapolipoprotein C-II is synthesized as a sialic acid containing glycoprotein which is subsequently desialylated prior to its proteolytic processing. Proapolipoprotein C-II, the major form found in plasma undergoes proteolytic cleavage of its N-terminal hexapeptide to generate the mature form apolipoprotein C-II, which occurs as the minor form in plasma.

It localises to the secreted. Its function is as follows. Component of chylomicrons, very low-density lipoproteins (VLDL), low-density lipoproteins (LDL), and high-density lipoproteins (HDL) in plasma. Plays an important role in lipoprotein metabolism as an activator of lipoprotein lipase, the enzyme which hydrolyzes the triacylglycerols on chylomicrons and VLDL. In Acinonyx jubatus (Cheetah), this protein is Apolipoprotein C-II (APOC2).